The chain runs to 100 residues: Large ribosomal subunit protein bL28 (100 aa).

Belongs to the bacterial ribosomal protein bL28 family.

This is Large ribosomal subunit protein bL28 from Gluconacetobacter diazotrophicus (strain ATCC 49037 / DSM 5601 / CCUG 37298 / CIP 103539 / LMG 7603 / PAl5).